Reading from the N-terminus, the 354-residue chain is Malate dehydrogenase 2, peroxisomal (354 aa).

Residues 10 to 18 (RIARISAHL) are peroxisomal targeting signal PTS2. NAD(+) contacts are provided by residues 49 to 55 (GAAGGIG) and D75. Substrate is bound by residues R122 and R128. NAD(+) is bound by residues N135 and 158–160 (ISN). N160 and R194 together coordinate substrate. Catalysis depends on H218, which acts as the Proton acceptor. M269 contacts NAD(+).

It belongs to the LDH/MDH superfamily. MDH type 1 family. Homodimer. In terms of tissue distribution, expressed in rosette leaves.

Its subcellular location is the peroxisome. The catalysed reaction is (S)-malate + NAD(+) = oxaloacetate + NADH + H(+). Functionally, catalyzes a reversible NAD-dependent dehydrogenase reaction involved in central metabolism and redox homeostasis between organelle compartments. Peroxisomal NAD-dependent malate dehydrogenase involved in fatty acid beta-oxidation. Reoxidizes NADH from the beta-oxidation and provides NAD for the conversion of fatty acyl-CoA to acetyl-CoA. Does not participate directly in the glyoxylate cycle. Required for maintenance of photosynthetic rates under photorespiratory conditions, and carbon flow during photorespiration. Supplies NADH reductant to the peroxisomal hydroxypyruvate reductase (HPR), which reduces hydroxypyruvate into glycerate in the photorespiratory cycle. The chain is Malate dehydrogenase 2, peroxisomal from Arabidopsis thaliana (Mouse-ear cress).